A 396-amino-acid polypeptide reads, in one-letter code: Pinosylvin synthase 2 (396 aa).

60-63 (KFKR) serves as a coordination point for substrate. C170 is an active-site residue. Residues L273 and 311–313 (GGR) contribute to the substrate site.

It belongs to the thiolase-like superfamily. Chalcone/stilbene synthases family. Homodimer.

The protein localises to the cytoplasm. It carries out the reaction (E)-cinnamoyl-CoA + 3 malonyl-CoA + 3 H(+) = (E)-pinosylvin + 4 CO2 + 4 CoA. The enzyme catalyses 3-phenylpropanoyl-CoA + 3 malonyl-CoA + 3 H(+) = dihydropinosylvin + 4 CO2 + 4 CoA. The protein operates within phytoalexin biosynthesis; pinosylvin biosynthesis. Functionally, catalyzes the production of pinosylvin from cinnamoyl-CoA and malonyl-CoA, and dihydropinosylvin from dihydrocinnamoyl-CoA. This chain is Pinosylvin synthase 2, found in Pinus strobus (Eastern white pine).